The chain runs to 308 residues: HPr kinase/phosphorylase (308 aa).

Catalysis depends on residues histidine 138 and lysine 159. Residue 153 to 160 (GESGLGKS) participates in ATP binding. Serine 160 contributes to the Mg(2+) binding site. Catalysis depends on aspartate 177, which acts as the Proton acceptor; for phosphorylation activity. Proton donor; for dephosphorylation activity. The segment at 201 to 210 (LEVRGLGLLD) is important for the catalytic mechanism of both phosphorylation and dephosphorylation. A Mg(2+)-binding site is contributed by glutamate 202. Arginine 243 is an active-site residue. Positions 264–269 (QVAAGR) are important for the catalytic mechanism of dephosphorylation.

This sequence belongs to the HPrK/P family. In terms of assembly, homohexamer. Mg(2+) is required as a cofactor.

It carries out the reaction [HPr protein]-L-serine + ATP = [HPr protein]-O-phospho-L-serine + ADP + H(+). The catalysed reaction is [HPr protein]-O-phospho-L-serine + phosphate + H(+) = [HPr protein]-L-serine + diphosphate. In terms of biological role, catalyzes the ATP- as well as the pyrophosphate-dependent phosphorylation of a specific serine residue in HPr, a phosphocarrier protein of the phosphoenolpyruvate-dependent sugar phosphotransferase system (PTS). HprK/P also catalyzes the pyrophosphate-producing, inorganic phosphate-dependent dephosphorylation (phosphorolysis) of seryl-phosphorylated HPr (P-Ser-HPr). This chain is HPr kinase/phosphorylase, found in Bordetella avium (strain 197N).